A 313-amino-acid polypeptide reads, in one-letter code: tRNA dimethylallyltransferase (313 aa).

17 to 24 (GPTASGKT) lines the ATP pocket. 19-24 (TASGKT) provides a ligand contact to substrate. 4 interaction with substrate tRNA regions span residues 42 to 45 (DSAL), 166 to 170 (QRLSR), 247 to 252 (RCVGYR), and 280 to 287 (KRQITWLR).

This sequence belongs to the IPP transferase family. Monomer. It depends on Mg(2+) as a cofactor.

It catalyses the reaction adenosine(37) in tRNA + dimethylallyl diphosphate = N(6)-dimethylallyladenosine(37) in tRNA + diphosphate. Functionally, catalyzes the transfer of a dimethylallyl group onto the adenine at position 37 in tRNAs that read codons beginning with uridine, leading to the formation of N6-(dimethylallyl)adenosine (i(6)A). This Photorhabdus laumondii subsp. laumondii (strain DSM 15139 / CIP 105565 / TT01) (Photorhabdus luminescens subsp. laumondii) protein is tRNA dimethylallyltransferase.